The primary structure comprises 353 residues: Putative glycosyltransferase TagX (353 aa).

It belongs to the glycosyltransferase 2 family.

This Staphylococcus aureus (strain Mu50 / ATCC 700699) protein is Putative glycosyltransferase TagX (tagX).